Here is a 510-residue protein sequence, read N- to C-terminus: 2,3-bisphosphoglycerate-independent phosphoglycerate mutase (510 aa).

Mn(2+) is bound by residues Asp-12 and Ser-62. Ser-62 (phosphoserine intermediate) is an active-site residue. Substrate contacts are provided by residues His-123, 153–154 (RD), Arg-185, Arg-191, 260–263 (RPDR), and Lys-335. Mn(2+) contacts are provided by Asp-402, His-406, Asp-443, His-444, and His-461.

The protein belongs to the BPG-independent phosphoglycerate mutase family. As to quaternary structure, monomer. The cofactor is Mn(2+).

It carries out the reaction (2R)-2-phosphoglycerate = (2R)-3-phosphoglycerate. The protein operates within carbohydrate degradation; glycolysis; pyruvate from D-glyceraldehyde 3-phosphate: step 3/5. In terms of biological role, catalyzes the interconversion of 2-phosphoglycerate and 3-phosphoglycerate. The sequence is that of 2,3-bisphosphoglycerate-independent phosphoglycerate mutase from Listeria monocytogenes serovar 1/2a (strain ATCC BAA-679 / EGD-e).